Consider the following 508-residue polypeptide: Light-independent protochlorophyllide reductase subunit B (508 aa).

D36 is a [4Fe-4S] cluster binding site. D294 (proton donor) is an active-site residue. A substrate-binding site is contributed by 429–430 (GM).

Belongs to the ChlB/BchB/BchZ family. In terms of assembly, protochlorophyllide reductase is composed of three subunits; ChlL, ChlN and ChlB. Forms a heterotetramer of two ChlB and two ChlN subunits. The cofactor is [4Fe-4S] cluster.

The enzyme catalyses chlorophyllide a + oxidized 2[4Fe-4S]-[ferredoxin] + 2 ADP + 2 phosphate = protochlorophyllide a + reduced 2[4Fe-4S]-[ferredoxin] + 2 ATP + 2 H2O. It participates in porphyrin-containing compound metabolism; chlorophyll biosynthesis (light-independent). Its function is as follows. Component of the dark-operative protochlorophyllide reductase (DPOR) that uses Mg-ATP and reduced ferredoxin to reduce ring D of protochlorophyllide (Pchlide) to form chlorophyllide a (Chlide). This reaction is light-independent. The NB-protein (ChlN-ChlB) is the catalytic component of the complex. The polypeptide is Light-independent protochlorophyllide reductase subunit B (Synechocystis sp. (strain ATCC 27184 / PCC 6803 / Kazusa)).